Here is a 759-residue protein sequence, read N- to C-terminus: LON peptidase N-terminal domain and RING finger protein 3 (759 aa).

The interval 1–69 (MESVRIEQML…PGTSTPESKV (69 aa)) is disordered. Positions 57 to 66 (EQSPGTSTPE) are enriched in polar residues. A TPR 1 repeat occupies 67-100 (SKVLLTQADALASRGRIREALEVYRQLSERQQLV). The RING-type 1 zinc-finger motif lies at 158 to 196 (CRKCHGFLSDPVSLSCGHTFCKLCLERGRAADRRCALCG). TPR repeat units follow at residues 243–276 (ASQL…APND), 278–310 (LLYS…RPMG), and 312–344 (KAHF…DGKN). The segment at 360–454 (HCSSQEEAAA…TDQGDKPALS (95 aa)) is disordered. The span at 380 to 393 (AKVKGDGQQHHMKD) shows a compositional bias: basic and acidic residues. The RING-type 2 zinc finger occupies 467 to 505 (CALCMRLFYEPVTTPCGHTFCLKCLERCLDHNAKCPLCK). Positions 546-755 (MEELSNLNKN…GIRRVLAFIS (210 aa)) constitute a Lon N-terminal domain.

The sequence is that of LON peptidase N-terminal domain and RING finger protein 3 (LONRF3) from Homo sapiens (Human).